Here is a 124-residue protein sequence, read N- to C-terminus: Small ribosomal subunit protein uS12 (124 aa).

3-methylthioaspartic acid is present on Asp-89.

This sequence belongs to the universal ribosomal protein uS12 family. As to quaternary structure, part of the 30S ribosomal subunit. Contacts proteins S8 and S17. May interact with IF1 in the 30S initiation complex.

Its function is as follows. With S4 and S5 plays an important role in translational accuracy. In terms of biological role, interacts with and stabilizes bases of the 16S rRNA that are involved in tRNA selection in the A site and with the mRNA backbone. Located at the interface of the 30S and 50S subunits, it traverses the body of the 30S subunit contacting proteins on the other side and probably holding the rRNA structure together. The combined cluster of proteins S8, S12 and S17 appears to hold together the shoulder and platform of the 30S subunit. This chain is Small ribosomal subunit protein uS12, found in Arthrobacter sp. (strain FB24).